The following is a 206-amino-acid chain: Large ribosomal subunit protein uL4 (206 aa).

Residues 63-98 (MYRQKGTGRARHSSARAPQFRGGGKAHGPVPHSHAH) form a disordered region. A compositionally biased stretch (basic residues) spans 64–76 (YRQKGTGRARHSS).

The protein belongs to the universal ribosomal protein uL4 family. In terms of assembly, part of the 50S ribosomal subunit.

Functionally, one of the primary rRNA binding proteins, this protein initially binds near the 5'-end of the 23S rRNA. It is important during the early stages of 50S assembly. It makes multiple contacts with different domains of the 23S rRNA in the assembled 50S subunit and ribosome. Forms part of the polypeptide exit tunnel. The chain is Large ribosomal subunit protein uL4 from Chelativorans sp. (strain BNC1).